The following is a 96-amino-acid chain: Large ribosomal subunit protein bL28 (96 aa).

The interval 1–22 is disordered; that stretch reads MSRRCELTGKGPMTGNNVSHAN.

It belongs to the bacterial ribosomal protein bL28 family.

This Ruegeria sp. (strain TM1040) (Silicibacter sp.) protein is Large ribosomal subunit protein bL28.